A 1183-amino-acid chain; its full sequence is MKTRQNKDSMSMRSGRKKEAPGPREELRSRGRASPGGVSTSSSDGKAEKSRQTAKKARVEETSTPKANKQGRSEEISESESEETSAPKKTKTEELPRPQSPSDLDSLDGRSINDDGSSDPRDIDQDNRSTSPSIYSPGSVENDSDSSSGLSQGPARPYHPPPLFPPSPPPPDSIPRQPESGFEPHPSVPPTGYHAPMEPPTSRLFQGPPPGAPPPHPQLYPGSAGGGVLSGPPMGPKGGAAASSVGPPSGGKQHPPPTTPIPISSSGASGAPPAKPPNTPVGAGNLPSAPPPATFPHVTPNLPPPPALRPLNNASASPPGMGAQPIPGHLPSPHAMGQGMSGLPPGPEKGPTLAPSPHPLPPASSSAPGPPMRYPYSSCSSSSVAASSSSSAATSQYPASQTLPSYPHSFPPPTSMSVSNQPPKYTQPSLPSQAVWSQGPPPPPPPYGRLLPNNNTHPGPFPPTGGQSTAHPPAPAHHHHQQQQQPQPQPQPQQHHHGNSGPPPPGAYPHPLESSNSHHAHPYNMSPSLGSLRPYPPGPAHLPPSHGQVSYSQAGPNGPPVSSSSNSSGSSSQAAYSCSHPSSSQGPQGASYPFPPVPPITTSSATLSTVIATVASSPAGYKTASPPGPPQYSKRAPSPGSYKTATPPGYKPGSPPSFRTGTPPGYRGTSPPAGPGTFKPGSPTVGPGPLPPAGPSSLSSLPPPPAAPTTGPPLTATQIKQEPAEEYETPESPVPPARSPSPPPKVVDVPSHASQSARFNKHLDRGFNSCARSDLYFVPLEGSKLAKKRADLVEKVRREAEQRAREEKEREREREREKEREREKERELERSVKLAQEGRAPVECPSLGPVPHRPPFEPGSAVATVPPYLGPDTPALRTLSEYARPHVMSPGNRNHPFYVPLGAVDPGLLGYNVPALYSSDPAAREREREARERDLRDRLKPGFEVKPSELEPLHGVPGPGLDPFPRHGGLALQPGPPGLHPFPFHPSLGPLERERLALAAGPALRPDMSYAERLAAERQHAERVAALGNDPLARLQMLNVTPHHHQHSHIHSHLHLHQQDAIHAASASVHPLIDPLASGSHLTRIPYPAGTLPNPLLPHPLHENEVLRHQLFAAPYRDLPASLSAPMSAAHQLQAMHAQSAELQRLALEQQQWLHAHHPLHSVPLPAQEDYYSHLKKESDKPL.

Disordered stretches follow at residues methionine 1–serine 603, serine 617–asparagine 760, and leucine 780–proline 855. Residues arginine 16–arginine 32 carry the Nuclear localization signal motif. Residues lysine 17–serine 29 show a composition bias toward basic and acidic residues. Position 34 is a phosphoserine (serine 34). The segment covering glycine 45–serine 63 has biased composition (basic and acidic residues). Phosphoserine occurs at positions 77, 79, 100, 102, and 106. A compositionally biased stretch (basic and acidic residues) spans leucine 107–asparagine 127. The span at arginine 128 to serine 151 shows a compositional bias: polar residues. Composition is skewed to pro residues over residues proline 157–serine 173 and glycine 207–glutamine 218. Residues isoleucine 261–proline 272 are compositionally biased toward low complexity. Pro residues predominate over residues proline 344–arginine 373. Residues serine 377–serine 400 are compositionally biased toward low complexity. Residues serine 415 to tryptophan 436 are compositionally biased toward polar residues. Positions histidine 510–proline 560 are involved in binding BAIAP2. The segment covering serine 562 to serine 584 has biased composition (low complexity). Position 625 is a phosphoserine (serine 625). Residue lysine 634 is modified to N6-acetyllysine. Threonine 646 bears the Phosphothreonine mark. Serine 654 bears the Phosphoserine mark. Threonine 662 is subject to Phosphothreonine. Composition is skewed to pro residues over residues leucine 701 to glycine 711 and serine 732 to lysine 745. Residue serine 732 is modified to Phosphoserine; by MAPK8. A phosphoserine mark is found at serine 739 and serine 741. The span at lysine 788 to valine 832 shows a compositional bias: basic and acidic residues. The interval aspartate 872–valine 887 is required for interaction with FAT1. Serine 889 carries the phosphoserine modification. A disordered region spans residues proline 921–lysine 940. The span at alanine 922–lysine 940 shows a compositional bias: basic and acidic residues. Residues alanine 1026–arginine 1034 carry the Nuclear export signal motif. Position 1108 is an asymmetric dimethylarginine (arginine 1108). Lysine 1176 is covalently cross-linked (Glycyl lysine isopeptide (Lys-Gly) (interchain with G-Cter in SUMO2)).

In terms of assembly, interacts with NR2E1; the interaction represses the transcriptional activity of NR2E1. Interact (via its N-terminus) with FAT1 (via a C-terminal domain). Interacts with BAIAP2, WWP1, WWP2, WWP3 and RERE. Interacts (via its N-terminus) with MTG8; the interaction enhances transcriptional repression of MTG8. Interacts with PQBP1. Phosphorylated in vitro by MAPK8/JNK1 on Ser-732. As to expression, predominant neuronal expression, Expressed in most brain regions including striatum, hippocampus, cerebral cortex, diencephalon, brain stem and cerebellum. Highest levels in cerebellum. Also highly expressed in kidney and testis, low expression in skeletal muscle and heart.

Its subcellular location is the nucleus. It is found in the cytoplasm. The protein resides in the perinuclear region. The protein localises to the cell junction. In terms of biological role, transcriptional corepressor. Recruits NR2E1 to repress transcription. Promotes vascular smooth cell (VSMC) migration and orientation. Corepressor of MTG8 transcriptional repression. Has some intrinsic repression activity. This Rattus norvegicus (Rat) protein is Atrophin-1 (Atn1).